The primary structure comprises 334 residues: WD repeat-containing protein 54 (334 aa).

WD repeat units lie at residues 116–155 (SSVQ…PNIV), 162–206 (GHQT…TLLT), and 250–289 (AHAR…ESGS).

As to quaternary structure, homodimer and homotrimer; forms tight forms of dimers and trimers. Interacts with IZUMO1 and IZUMO1R/JUNO. Post-translationally, cross-linked to tightly form both dimers and trimers by TGM2. Cross-linking enhances the activation of EGF receptor-mediated signaling pathway. Cross-linking is inhibited by EGF. In terms of processing, ubiquitinated. EGF increases ubiquitination.

Its subcellular location is the vesicle. The protein resides in the cytoplasm. The protein localises to the cell membrane. Plays a role in the adhesion and fusion of the sperm-oocyte membrane through its interactions with IZUMO1 and IZUMO1R/JUNO. When cross-linked to form dimers and trimers, it has a regulatory effect on ERK signaling pathway activity in response to EGF stimulation. Colocalizes with the EGF receptor in WDR54-specific vesicle where it sustains the internalization and controls the degradation of the EGF receptor after EGF stimulation. The chain is WD repeat-containing protein 54 from Mus musculus (Mouse).